The primary structure comprises 176 residues: Probable inosine/xanthosine triphosphatase (176 aa).

A Mg(2+)-binding site is contributed by aspartate 36.

Belongs to the YjjX NTPase family. In terms of assembly, homodimer. The cofactor is Mg(2+). It depends on Mn(2+) as a cofactor.

The enzyme catalyses XTP + H2O = XDP + phosphate + H(+). The catalysed reaction is ITP + H2O = IDP + phosphate + H(+). Phosphatase that hydrolyzes non-canonical purine nucleotides such as XTP and ITP to their respective diphosphate derivatives. Probably excludes non-canonical purines from DNA/RNA precursor pool, thus preventing their incorporation into DNA/RNA and avoiding chromosomal lesions. This is Probable inosine/xanthosine triphosphatase from Saccharolobus islandicus (strain M.16.4 / Kamchatka #3) (Sulfolobus islandicus).